The sequence spans 334 residues: Tryptophan--tRNA ligase (334 aa).

ATP contacts are provided by residues 11–13 (QPS) and 19–20 (GN). The 'HIGH' region motif lies at 12-20 (PSGELTIGN). Aspartate 135 lines the L-tryptophan pocket. ATP is bound by residues 147-149 (GED), valine 186, and 195-199 (KMSKS). Residues 195–199 (KMSKS) carry the 'KMSKS' region motif.

Belongs to the class-I aminoacyl-tRNA synthetase family. As to quaternary structure, homodimer.

The protein localises to the cytoplasm. The enzyme catalyses tRNA(Trp) + L-tryptophan + ATP = L-tryptophyl-tRNA(Trp) + AMP + diphosphate + H(+). Catalyzes the attachment of tryptophan to tRNA(Trp). The polypeptide is Tryptophan--tRNA ligase (Shigella flexneri).